A 173-amino-acid polypeptide reads, in one-letter code: ATP synthase subunit d, mitochondrial (173 aa).

A mitochondrion-targeting transit peptide spans 1-23 (MAARSAALKIDWVKVTSSLGLRG).

The protein belongs to the ATPase d subunit family. F-type ATPases have 2 components, CF(1) - the catalytic core - and CF(0) - the membrane proton channel. In yeast, the dimeric form of ATP synthase consists of 17 polypeptides: alpha, beta, gamma, delta, epsilon, 4 (B), 5 (OSCP), 6 (A), 8, 9 (C), d, E (Tim11), f, g, h, i/j and k.

It is found in the mitochondrion inner membrane. Its function is as follows. Mitochondrial membrane ATP synthase (F(1)F(0) ATP synthase or Complex V) produces ATP from ADP in the presence of a proton gradient across the membrane which is generated by electron transport complexes of the respiratory chain. F-type ATPases consist of two structural domains, F(1) - containing the extramembraneous catalytic core, and F(0) - containing the membrane proton channel, linked together by a central stalk and a peripheral stalk. During catalysis, ATP synthesis in the catalytic domain of F(1) is coupled via a rotary mechanism of the central stalk subunits to proton translocation. Part of the complex F(0) domain and the peripheric stalk, which acts as a stator to hold the catalytic alpha(3)beta(3) subcomplex and subunit a/ATP6 static relative to the rotary elements. The sequence is that of ATP synthase subunit d, mitochondrial (atp7) from Aspergillus terreus (strain NIH 2624 / FGSC A1156).